Consider the following 507-residue polypeptide: ATP synthase subunit alpha, chloroplastic (507 aa).

170-177 (GDRQTGKT) is a binding site for ATP.

The protein belongs to the ATPase alpha/beta chains family. As to quaternary structure, F-type ATPases have 2 components, CF(1) - the catalytic core - and CF(0) - the membrane proton channel. CF(1) has five subunits: alpha(3), beta(3), gamma(1), delta(1), epsilon(1). CF(0) has four main subunits: a, b, b' and c.

The protein resides in the plastid. It is found in the chloroplast thylakoid membrane. It catalyses the reaction ATP + H2O + 4 H(+)(in) = ADP + phosphate + 5 H(+)(out). Functionally, produces ATP from ADP in the presence of a proton gradient across the membrane. The alpha chain is a regulatory subunit. This is ATP synthase subunit alpha, chloroplastic from Piper cenocladum (Ant piper).